Consider the following 246-residue polypeptide: UDP-N-acetyl-D-mannosaminuronic acid transferase (246 aa).

This sequence belongs to the glycosyltransferase 26 family.

The catalysed reaction is UDP-N-acetyl-alpha-D-mannosaminouronate + N-acetyl-alpha-D-glucosaminyl-di-trans,octa-cis-undecaprenyl diphosphate = beta-D-ManNAcA-(1-&gt;4)-alpha-D-GlcNAc-di-trans,octa-cis-undecaprenyl diphosphate + UDP + H(+). Its pathway is bacterial outer membrane biogenesis; enterobacterial common antigen biosynthesis. Its function is as follows. Catalyzes the synthesis of Und-PP-GlcNAc-ManNAcA (Lipid II), the second lipid-linked intermediate involved in enterobacterial common antigen (ECA) synthesis. This Salmonella agona (strain SL483) protein is UDP-N-acetyl-D-mannosaminuronic acid transferase.